Here is a 144-residue protein sequence, read N- to C-terminus: uncharacterized protein (144 aa).

Residues 1–22 (MCTDVAFFSLDCLATWLGGVCS) form the signal peptide.

This is an uncharacterized protein from Saccharomyces cerevisiae (strain ATCC 204508 / S288c) (Baker's yeast).